The chain runs to 784 residues: MNQMNVTGMNPGAGGPVGGVPMMNNGSTAPRNDGNVNNIPETMINNLNTYIYDYFLKRGYHECARALVKDESIKLNTEPPTKTSPGHRREDMNGVEGDAIMTDSKDGDKIKIPDDLPRPNLASESQQSSFLLDWFSLFWDFFWAQRKKGNSNDVRQYLQHTQNMMRLREQQHNQLLRQQPVMPRQMGPLNMRRNGMVPANLQKTVLQNNTGGLSQQQIAQLQKNQQMHMMQQMQREHSDMDMNGHRPQSPSSAENAPSPSKRPRLENGPMNGQQLAPNGRGQGQAMPGQPNSQALLMQNGLNPRAMNPAQFAGFQQQGPAAQQKSIQVYAQNLALHHSRSALNNQGIPNGLMNPGVMPNQTDLVPMPDGQGMYPMNGDYYGTNGQMAQVRAGMQTPGGQHGNHALQDYQMQLMLLEQQNKRRLMMARQEQDSMSRADGQPPMPGQQGLPPGTSPQGSRAGTSPNPNEQMKRGTPKMPQTGLPGSPNAADAMGQNRGSPAAMNFNGGQMPPDMAGGQFFMKGMPDAMGGPNGMRPPSSNPAFSGPQMGQPIPAGAVNRVPSGNWQQQQGQPMGPQQSPAQQPQSTGTPQTQNSMPPPQAPPAGANAARTSPQSQNAAPPTPQQANKPAPKKREPKDTARKRTTKKQPAAAAAAANTAATPSSEAEHPPTTPTPSTPITPQHPSSFNKAGPNPTTSAPQQPTSAPAPQPIVQQPPPDQTQQSFNDLSIPDASAFNLDFSALENPDILENFDFDTFLNTDADTAGFGFDPNISYPTDGVETGAGDGL.

The 33-residue stretch at 43–75 (MINNLNTYIYDYFLKRGYHECARALVKDESIKL) folds into the LisH domain. Residues 75–84 (LNTEPPTKTS) are compositionally biased toward polar residues. Disordered regions lie at residues 75-122 (LNTE…PNLA), 212-295 (GLSQ…SQAL), 424-726 (MMAR…DLSI), and 764-784 (GFDP…GDGL). A compositionally biased stretch (basic and acidic residues) spans 103 to 117 (DSKDGDKIKIPDDLP). The segment covering 215–233 (QQQIAQLQKNQQMHMMQQM) has biased composition (low complexity). The segment covering 234 to 244 (QREHSDMDMNG) has biased composition (basic and acidic residues). The span at 247-259 (PQSPSSAENAPSP) shows a compositional bias: low complexity. The segment covering 453–467 (SPQGSRAGTSPNPNE) has biased composition (polar residues). Over residues 564-592 (QQQQGQPMGPQQSPAQQPQSTGTPQTQNS) the composition is skewed to low complexity. Residues 607–624 (RTSPQSQNAAPPTPQQAN) are compositionally biased toward polar residues. Over residues 629–638 (KKREPKDTAR) the composition is skewed to basic and acidic residues. 2 stretches are compositionally biased toward low complexity: residues 644-661 (KQPA…TPSS) and 691-701 (PTTSAPQQPTS). Residues 702-715 (APAPQPIVQQPPPD) show a composition bias toward pro residues.

This sequence belongs to the FLO8 family. As to quaternary structure, interacts with ptaB.

The protein localises to the nucleus. Its function is as follows. Transcription factor that controls the expression of genes related to the process of conidiation and adherence and regulates biofilm formation. Controls conidiation and adhesion primarily by affecting the expression of the three regulatory genes flbB, stuA and medA. Required for virulence in an egg and a mouse infection model. The sequence is that of Transcriptional activator somA from Aspergillus fumigatus (strain ATCC MYA-4609 / CBS 101355 / FGSC A1100 / Af293) (Neosartorya fumigata).